Here is a 152-residue protein sequence, read N- to C-terminus: Superoxide dismutase [Cu-Zn] (152 aa).

Residues H45, H47, and H62 each contribute to the Cu cation site. The cysteines at positions 56 and 145 are disulfide-linked. H62, H70, H79, and D82 together coordinate Zn(2+). Residue H119 participates in Cu cation binding.

Belongs to the Cu-Zn superoxide dismutase family. Homodimer. Requires Cu cation as cofactor. The cofactor is Zn(2+).

The protein resides in the cytoplasm. It carries out the reaction 2 superoxide + 2 H(+) = H2O2 + O2. Destroys radicals which are normally produced within the cells and which are toxic to biological systems. The protein is Superoxide dismutase [Cu-Zn] (SODCC) of Pisum sativum (Garden pea).